Consider the following 141-residue polypeptide: Small ribosomal subunit protein uS8c (141 aa).

This sequence belongs to the universal ribosomal protein uS8 family. Part of the 30S ribosomal subunit.

The protein resides in the plastid. It is found in the chloroplast. In terms of biological role, one of the primary rRNA binding proteins, it binds directly to 16S rRNA central domain where it helps coordinate assembly of the platform of the 30S subunit. This Pleurastrum terricola (Filamentous green alga) protein is Small ribosomal subunit protein uS8c (rps8).